The sequence spans 371 residues: Protein arginine N-methyltransferase 1 (371 aa).

The SAM-dependent MTase PRMT-type domain occupies 50–361 (KDYYFDSYAH…DLDFKGQLCE (312 aa)). The S-adenosyl-L-methionine site is built by His-63, Arg-72, Gly-96, and Glu-118. Residue Arg-72 participates in S-adenosyl-L-homocysteine binding. Glu-118 contributes to the S-adenosyl-L-homocysteine binding site. Lys-134 is subject to N6-succinyllysine. A Glycyl lysine isopeptide (Lys-Gly) (interchain with G-Cter in ubiquitin) cross-link involves residue Lys-145. S-adenosyl-L-homocysteine-binding residues include Val-146 and Glu-147. S-adenosyl-L-methionine is bound at residue Glu-147. Catalysis depends on residues Glu-162 and Glu-171. 2 positions are modified to N6-acetyllysine: Lys-228 and Lys-233. A phosphoserine mark is found at Ser-304 and Ser-307.

Belongs to the class I-like SAM-binding methyltransferase superfamily. Protein arginine N-methyltransferase family. As to quaternary structure, homodimer. Homooctamer; individual homodimers associates to form a homooctamer. Individual homodimers can associate to form a homohexamer. Heterodimer with PRMT8. Interacts with BTG1, BTG2, NFATC2IP and IFNAR1. Interacts with and methylates CHTOP, thereby enabling the interaction of CHTOP with the 5FMC complex. Interacts with ILF3 and SUPT5H. Interacts with and methylates FOXO1, leading to the nuclear retention of FOXO1 and the stimulation of FOXO1 transcriptional activity. Methylation of FOXO1 is increased upon oxidative stress. Interacts with and probably methylates ATXN2L. Component of the methylosome, a 20S complex containing at least CLNS1A/pICln, PRMT5/SKB1, WDR77/MEP50, PRMT1 and ERH. Interacts with DHX9 (via RGG region). Interacts (via N-terminus) with HABP4. Interacts with MAP3K5/ASK1; the interaction results in MAP3K5 methylation by PRMT1 which inhibits MAP3K5 activation. Interacts with TRIM48; the interaction results in ubiquitination of PRMT1 by TRIM48, leading to PRMT1 proteasomal degradation and activation of MAP3K5. Interacts with GATOR1 complex; this interaction is S-adenosyl-L-methionine (SAM) dependent and is perturbated by SAMTOR in a SAM-sensitive manner. Interacts with GFI1; promoting recognition and binding of MRE11 and TP53BP1 substrates by PRMT1. Polyubiquitinated at Lys-145 by the SCF(FBXL17) complex, leading to its subsequent degradation. Ubiquitination is regulated by acetylation at Lys-228 and Lys-233. Polyubiquitinated by E3 ubiquitin-protein ligase TRIM48, leading to suppression of MAP3K5/ASK1 methylation and subsequent MAP3K5 activation. In terms of processing, acetylation at Lys-228 and Lys-233 regulates ubiquitination by the SCF(FBXL17) complex. Acetylated at Lys-233 by p300/EP300. Deacetylated at Lys-228 and Lys-233 by SIRT1. In terms of tissue distribution, widely expressed. Expressed strongly in colorectal cancer cells (at protein level). Expressed strongly in colorectal cancer tissues compared to wild-type colon samples (at protein level). Expressed strongly in colorectal cancer tissues compared to wild-type colon samples.

Its subcellular location is the nucleus. The protein localises to the nucleoplasm. The protein resides in the cytoplasm. It is found in the cytosol. It localises to the lysosome membrane. The catalysed reaction is L-arginyl-[protein] + 2 S-adenosyl-L-methionine = N(omega),N(omega)-dimethyl-L-arginyl-[protein] + 2 S-adenosyl-L-homocysteine + 2 H(+). It catalyses the reaction L-arginyl-[protein] + S-adenosyl-L-methionine = N(omega)-methyl-L-arginyl-[protein] + S-adenosyl-L-homocysteine + H(+). The enzyme catalyses N(omega)-methyl-L-arginyl-[protein] + S-adenosyl-L-methionine = N(omega),N(omega)-dimethyl-L-arginyl-[protein] + S-adenosyl-L-homocysteine + H(+). Arginine methyltransferase that methylates (mono and asymmetric dimethylation) the guanidino nitrogens of arginyl residues present in proteins such as ESR1, histone H2, H3 and H4, FMR1, ILF3, HNRNPA1, HNRNPD, NFATC2IP, SUPT5H, TAF15, EWS, HABP4, SERBP1, RBM15, FOXO1, CHTOP, MAP3K5/ASK1, MICU1 and NPRL2. Constitutes the main enzyme that mediates monomethylation and asymmetric dimethylation of histone H4 'Arg-3' (H4R3me1 and H4R3me2a, respectively), a specific tag for epigenetic transcriptional activation. May be involved in the regulation of TAF15 transcriptional activity, act as an activator of estrogen receptor (ER)-mediated transactivation, play a key role in neurite outgrowth and act as a negative regulator of megakaryocytic differentiation, by modulating p38 MAPK pathway. Methylates RBM15, promoting ubiquitination and degradation of RBM15. Methylates MRE11 and TP53BP1, promoting the DNA damage response. Methylates FOXO1 and retains it in the nucleus increasing its transcriptional activity. Methylates CHTOP and this methylation is critical for its 5-hydroxymethylcytosine (5hmC)-binding activity. Methylates MAP3K5/ASK1 at 'Arg-78' and 'Arg-80' which promotes association of MAP3K5 with thioredoxin and negatively regulates MAP3K5 association with TRAF2, inhibiting MAP3K5 stimulation and MAP3K5-induced activation of JNK. Methylates H4R3 in genes involved in glioblastomagenesis in a CHTOP- and/or TET1-dependent manner. Plays a role in regulating alternative splicing in the heart. Methylates NPRL2 at 'Arg-78' leading to inhibition of its GTPase activator activity and then the GATOR1 complex and consequently inducing timely mTORC1 activation under methionine-sufficient conditions. This is Protein arginine N-methyltransferase 1 from Homo sapiens (Human).